Here is a 2209-residue protein sequence, read N- to C-terminus: Genome polyprotein (2209 aa).

A lipid anchor (N-myristoyl glycine; by host) is attached at Gly-2. The Cytoplasmic portion of the chain corresponds to 2 to 1520 (GAQVSSQKVG…NINRAMTILQ (1519 aa)). Residues 580-600 (GLGQMLESMIDNTVRETVGAA) form an amphipathic alpha-helix region. Catalysis depends on for protease 2A activity residues His-901 and Asp-919. Positions 936 and 938 each coordinate Zn(2+). Cys-990 acts as the For protease 2A activity in catalysis. Zn(2+) is bound by residues Cys-996 and His-998. The segment at 1128-1200 (GDSWLKKFTE…HQSCPSQEHQ (73 aa)) is membrane-binding. Residues 1128-1266 (GDSWLKKFTE…SPGTGKSVAT (139 aa)) form an oligomerization region. The RNA-binding stretch occupies residues 1149-1153 (SNKIS). In terms of domain architecture, SF3 helicase spans 1232-1388 (EHTINNYIQF…NEYSRDGKLN (157 aa)). 1256 to 1263 (GSPGTGKS) contributes to the ATP binding site. Residues Cys-1396, Cys-1399, Cys-1408, and Cys-1413 each coordinate Zn(2+). Residues 1396–1413 (CKNCHQPANFKRCCPLVC) form a C4-type zinc finger. The interval 1440–1447 (ERNRRSNI) is RNA-binding. An oligomerization region spans residues 1451 to 1456 (MEALFQ). Residues 1521–1536 (AVTTFAAVAGVVYVMY) lie within the membrane without spanning it. Residues 1537–2209 (KLFAGHQGAY…TLYRRWLDSF (673 aa)) lie on the Cytoplasmic side of the membrane. Tyr-1546 carries the post-translational modification O-(5'-phospho-RNA)-tyrosine. In terms of domain architecture, Peptidase C3 spans 1566 to 1744 (GPGFDYAVAM…FAAALKRSYF (179 aa)). Active-site for protease 3C activity residues include His-1605, Glu-1636, and Cys-1712. The RdRp catalytic domain occupies 1975-2090 (EKLFAFDYTG…SYPHEVDASL (116 aa)). 2 residues coordinate Mg(2+): Asp-1981 and Asp-2076.

Belongs to the picornaviruses polyprotein family. In terms of assembly, interacts with capsid protein VP1 and capsid protein VP3 to form heterotrimeric protomers. As to quaternary structure, interacts with capsid protein VP0, and capsid protein VP3 to form heterotrimeric protomers. Interacts with human PVR. Five protomers subsequently associate to form pentamers which serve as building blocks for the capsid. Interacts with capsid protein VP2, capsid protein VP3 and capsid protein VP4 following cleavage of capsid protein VP0. Interacts with capsid protein VP1 and capsid protein VP3 in the mature capsid. In terms of assembly, interacts with capsid protein VP0 and capsid protein VP1 to form heterotrimeric protomers. Five protomers subsequently associate to form pentamers which serve as building blocks for the capsid. Interacts with capsid protein VP4 in the mature capsid. Interacts with protein 2C; this interaction may be important for virion morphogenesis. As to quaternary structure, interacts with capsid protein VP1 and capsid protein VP3. Homodimer. In terms of assembly, homohexamer; forms a hexameric ring structure with 6-fold symmetry characteristic of AAA+ ATPases. Interacts (via N-terminus) with host RTN3 (via reticulon domain); this interaction is important for viral replication. Interacts with capsid protein VP3; this interaction may be important for virion morphogenesis. As to quaternary structure, interacts with protein 3CD. Homodimer. Interacts with host GBF1. Interacts (via GOLD domain) with host ACBD3 (via GOLD domain); this interaction allows the formation of a viral protein 3A/ACBD3 heterotetramer with a 2:2 stoichiometry, which will stimulate the recruitment of host PI4KB in order to synthesize PI4P at the viral RNA replication sites. In terms of assembly, interacts with RNA-directed RNA polymerase. As to quaternary structure, interacts with protein 3AB and with RNA-directed RNA polymerase. Interacts with Viral protein genome-linked and with protein 3CD. Requires Mg(2+) as cofactor. Specific enzymatic cleavages in vivo by the viral proteases yield processing intermediates and the mature proteins. In terms of processing, myristoylation is required for the formation of pentamers during virus assembly. Further assembly of 12 pentamers and a molecule of genomic RNA generates the provirion. Post-translationally, during virion maturation, immature virions are rendered infectious following cleavage of VP0 into VP4 and VP2. This maturation seems to be an autocatalytic event triggered by the presence of RNA in the capsid and it is followed by a conformational change infectious virion. Myristoylation is required during RNA encapsidation and formation of the mature virus particle. In terms of processing, VPg is uridylylated by the polymerase into VPg-pUpU. This acts as a nucleotide-peptide primer for the genomic RNA replication.

The protein localises to the virion. It is found in the host cytoplasm. It localises to the host cytoplasmic vesicle membrane. Its subcellular location is the host nucleus. It carries out the reaction a ribonucleoside 5'-triphosphate + H2O = a ribonucleoside 5'-diphosphate + phosphate + H(+). The catalysed reaction is Selective cleavage of Tyr-|-Gly bond in the picornavirus polyprotein.. It catalyses the reaction RNA(n) + a ribonucleoside 5'-triphosphate = RNA(n+1) + diphosphate. The enzyme catalyses Selective cleavage of Gln-|-Gly bond in the poliovirus polyprotein. In other picornavirus reactions Glu may be substituted for Gln, and Ser or Thr for Gly.. Its activity is regulated as follows. Replication or transcription is subject to high level of random mutations by the nucleotide analog ribavirin. Its function is as follows. Forms an icosahedral capsid of pseudo T=3 symmetry with capsid proteins VP2 and VP3. The capsid is 300 Angstroms in diameter, composed of 60 copies of each capsid protein and enclosing the viral positive strand RNA genome. Capsid protein VP1 mainly forms the vertices of the capsid. Capsid protein VP1 interacts with host cell receptor PVR to provide virion attachment to target host cells. This attachment induces virion internalization predominantly through clathrin- and caveolin-independent endocytosis in Hela cells and through caveolin-mediated endocytosis in brain microvascular endothelial cells. Tyrosine kinases are probably involved in the entry process. Virus binding to PVR induces increased junctional permeability and rearrangement of junctional proteins. Modulation of endothelial tight junctions, as well as cytolytic infection of endothelial cells themselves, may result in loss of endothelial integrity which may help the virus to reach the CNS. After binding to its receptor, the capsid undergoes conformational changes. Capsid protein VP1 N-terminus (that contains an amphipathic alpha-helix) and capsid protein VP4 are externalized. Together, they shape a pore in the host membrane through which viral genome is translocated to host cell cytoplasm. Forms an icosahedral capsid of pseudo T=3 symmetry with capsid proteins VP2 and VP3. The capsid is 300 Angstroms in diameter, composed of 60 copies of each capsid protein and enclosing the viral positive strand RNA genome. Functionally, lies on the inner surface of the capsid shell. After binding to the host receptor, the capsid undergoes conformational changes. Capsid protein VP4 is released, Capsid protein VP1 N-terminus is externalized, and together, they shape a pore in the host membrane through which the viral genome is translocated into the host cell cytoplasm. In terms of biological role, component of immature procapsids, which is cleaved into capsid proteins VP4 and VP2 after maturation. Allows the capsid to remain inactive before the maturation step. Its function is as follows. Cysteine protease that cleaves viral polyprotein and specific host proteins. It is responsible for the autocatalytic cleavage between the P1 and P2 regions, which is the first cleavage occurring in the polyprotein. Also cleaves the host translation initiation factor EIF4G1, in order to shut down the capped cellular mRNA translation. Inhibits the host nucleus-cytoplasm protein and RNA trafficking by cleaving host members of the nuclear pores including NUP98, NUP62 and NUP153. Counteracts stress granule formation probably by antagonizing its assembly or promoting its dissassembly. Cleaves and inhibits host IFIH1/MDA5, thereby inhibiting the type-I IFN production and the establishment of the antiviral state. Cleaves and inhibits host MAVS, thereby inhibiting the type-I IFN production and the establishment of the antiviral state. Plays an essential role in the virus replication cycle by acting as a viroporin. Creates a pore in the host endoplasmic reticulum and as a consequence releases Ca2+ in the cytoplasm of infected cell. In turn, high levels of cytoplasmic calcium may trigger membrane trafficking and transport of viral ER-associated proteins to viroplasms, sites of viral genome replication. Functionally, induces and associates with structural rearrangements of intracellular membranes. Displays RNA-binding, nucleotide binding and NTPase activities. May play a role in virion morphogenesis and viral RNA encapsidation by interacting with the capsid protein VP3. In terms of biological role, localizes the viral replication complex to the surface of membranous vesicles. Together with protein 3CD binds the Cis-Active RNA Element (CRE) which is involved in RNA synthesis initiation. Acts as a cofactor to stimulate the activity of 3D polymerase, maybe through a nucleid acid chaperone activity. Its function is as follows. Localizes the viral replication complex to the surface of membranous vesicles. It inhibits host cell endoplasmic reticulum-to-Golgi apparatus transport and causes the disassembly of the Golgi complex, possibly through GBF1 interaction. This would result in depletion of MHC, trail receptors and IFN receptors at the host cell surface. Plays an essential role in viral RNA replication by recruiting ACBD3 and PI4KB at the viral replication sites, thereby allowing the formation of the rearranged membranous structures where viral replication takes place. Acts as a primer for viral RNA replication and remains covalently bound to viral genomic RNA. VPg is uridylylated prior to priming replication into VPg-pUpU. The oriI viral genomic sequence may act as a template for this. The VPg-pUpU is then used as primer on the genomic RNA poly(A) by the RNA-dependent RNA polymerase to replicate the viral genome. During genome replication, the VPg-RNA linkage is removed by the host TDP2, thereby accelerating replication. During the late stage of the replication cycle, host TDP2 is excluded from sites of viral RNA synthesis and encapsidation, allowing for the generation of progeny virions. Functionally, involved in the viral replication complex and viral polypeptide maturation. It exhibits protease activity with a specificity and catalytic efficiency that is different from protease 3C. Protein 3CD lacks polymerase activity. Protein 3CD binds to the 5'UTR of the viral genome. In terms of biological role, major viral protease that mediates proteolytic processing of the polyprotein. Cleaves host EIF5B, contributing to host translation shutoff. Also cleaves host PABPC1, contributing to host translation shutoff. Cleaves host RIGI and thus contributes to the inhibition of type I interferon production. Cleaves host NLRP1, triggers host N-glycine-mediated degradation of the autoinhibitory NLRP1 N-terminal fragment. Inhibits the integrated stress response (ISR) in the infected cell by cleaving host G3BP1. Stress granule formation is thus inhibited, which allows protein synthesis and viral replication. Its function is as follows. Replicates the viral genomic RNA on the surface of intracellular membranes. May form linear arrays of subunits that propagate along a strong head-to-tail interaction called interface-I. Covalently attaches UMP to a tyrosine of VPg, which is used to prime RNA synthesis. The positive stranded RNA genome is first replicated at virus induced membranous vesicles, creating a dsRNA genomic replication form. This dsRNA is then used as template to synthesize positive stranded RNA genomes. ss(+)RNA genomes are either translated, replicated or encapsidated. In Homo sapiens (Human), this protein is Genome polyprotein.